A 508-amino-acid polypeptide reads, in one-letter code: Cobyric acid synthase (508 aa).

The region spanning 255-454 is the GATase cobBQ-type domain; it reads ELNIAVLKLP…LHGVFESGPW (200 aa). The active-site Nucleophile is C336. The active site involves H446.

It belongs to the CobB/CobQ family. CobQ subfamily.

It functions in the pathway cofactor biosynthesis; adenosylcobalamin biosynthesis. Its function is as follows. Catalyzes amidations at positions B, D, E, and G on adenosylcobyrinic A,C-diamide. NH(2) groups are provided by glutamine, and one molecule of ATP is hydrogenolyzed for each amidation. This is Cobyric acid synthase from Synechococcus sp. (strain CC9311).